Here is a 408-residue protein sequence, read N- to C-terminus: MSLEDTLANMSLYDAKKYFRKAQNVVFNYTEMEGKVREATNNEPWGASSTLMDQISQGTYNFREREEILSMIFRRFTEKAGSEWRQIYKALQLLDYLIKHGSERFIDDTRNSINLIRILETFHYIDSQGRDQGINVRTRVKALIELLSDDNKIRAERKKARETAKKYKGVAGGSASADGSLNSKAGFTSTKVHGISVSADFDSDNEDNEDGSFSQNGYNDNASRATSTPGQGKQEPEDFVDFFSSESSKPSKELIQEDEKKADEEEDDDDEFSEFQSAVPVTNPANSFNLLNTSPIEGMPATTSSMPFYNSSTTDQGKITPAIAEPKKVDPFSSLFSTAKASAEAPSAPKASQAKAAASNPVSNSTTALSTDQDDDDEFGEMHGGAVQQEQNTNNNHTSSKEIDLLSF.

Ser-2 is modified (N-acetylserine). Residues 24–157 enclose the ENTH domain; sequence NVVFNYTEME…SDDNKIRAER (134 aa). The interval 162-182 is disordered; sequence ETAKKYKGVAGGSASADGSLN. Phosphoserine is present on residues Ser-196, Ser-198, Ser-203, Ser-212, and Ser-223. 2 disordered regions span residues 199–322 and 338–408; these read ADFD…ITPA and TAKA…LLSF. Positions 201 to 210 are enriched in acidic residues; sequence FDSDNEDNED. A compositionally biased stretch (polar residues) spans 211 to 231; it reads GSFSQNGYNDNASRATSTPGQ. The span at 249 to 263 shows a compositional bias: basic and acidic residues; the sequence is KPSKELIQEDEKKAD. The segment covering 264–273 has biased composition (acidic residues); it reads EEEDDDDEFS. Residues 279 to 317 show a composition bias toward polar residues; that stretch reads VPVTNPANSFNLLNTSPIEGMPATTSSMPFYNSSTTDQG. The segment covering 338–361 has biased composition (low complexity); that stretch reads TAKASAEAPSAPKASQAKAAASNP. Composition is skewed to polar residues over residues 362–371 and 388–398; these read VSNSTTALST and QQEQNTNNNHT. Residues 399–408 show a composition bias toward basic and acidic residues; the sequence is SSKEIDLLSF.

As to quaternary structure, interacts with the clathrin adapter GGA2, and VPS27.

The protein localises to the cytoplasm. The protein resides in the golgi apparatus. It localises to the trans-Golgi network membrane. Its subcellular location is the cytoplasmic vesicle. It is found in the clathrin-coated vesicle membrane. Its function is as follows. Involved in the recruitment of clathrin to the Golgi network and endosomes to form clathrin coated vesicles. Plays a role in the trafficking of clathrin between the Golgi network and endosomes. Binds to membranes enriched in phosphatidylinositol-3,5-bisphosphate (PtdIns(3,5)P2) and, in association with VPS27, is involved in protein sorting at the multivesicular body (MVB). This is Epsin-3 (ENT3) from Saccharomyces cerevisiae (strain ATCC 204508 / S288c) (Baker's yeast).